The following is a 411-amino-acid chain: Glutamyl-tRNA reductase (411 aa).

Residues 48 to 51 (TCNR), Ser106, 111 to 113 (EDQ), and Gln117 each bind substrate. Cys49 acts as the Nucleophile in catalysis. 186-191 (GAGDMG) provides a ligand contact to NADP(+).

It belongs to the glutamyl-tRNA reductase family. In terms of assembly, homodimer.

The enzyme catalyses (S)-4-amino-5-oxopentanoate + tRNA(Glu) + NADP(+) = L-glutamyl-tRNA(Glu) + NADPH + H(+). It functions in the pathway porphyrin-containing compound metabolism; protoporphyrin-IX biosynthesis; 5-aminolevulinate from L-glutamyl-tRNA(Glu): step 1/2. Catalyzes the NADPH-dependent reduction of glutamyl-tRNA(Glu) to glutamate 1-semialdehyde (GSA). This chain is Glutamyl-tRNA reductase, found in Clostridium novyi (strain NT).